The sequence spans 1436 residues: MEPADLSNLRGRSLRASIRGSMRGSIRENSNSIWRNNGAEVFSRSARDEDDEEALKWAALEKLPTYDRLRKGILFGSQGAAAEVDVDDSGVLERKNLLERLVKVADEDNEKFLLKLKNRIDRVGIDFPSIEVRFEHLNIDADAYVGSRALPTFTNFISNFVEGLLDSIHILPSKKRQVTILKDVSGIVKPCRMTLLLGPPGSGKTTLLLALAGKLDSALKVTGKVTYNGHELHEFVPQRTAAYISQHDLHIGEMTVRETLEFSARCQGVGSRYEMLAELSRREKAANIKPDADIDMFMKAASTEGQEAKVVTDYILKILGLDICADTMVGDQMIRGISGGQKKRVTTGEMIVGPSKALFMDEISTGLDSSTTYSIVNSLKQSVRIMKGTALISLLQPAPETYNLFDDIILLSDGYIVYEGPREEVLEFFESMGFKCPERKGAADFLQEVTSKKDQQQYWIRRDEPYRFITSKEFAEAYQSFHVGRKVSDELKTTFDKSKSHPAALTTQKYGIGKRQLLKVCTERELLLMQRNSFVYLFKFFQLLIIALMTMTIFFRTKMPRDSAEDGGIYSGALFFVVIMIMFNGLSELPMTLYKLPVFYKQRDFLFYPSWAYAIPSWILKIPVTFAEVGMWVFLTYYVMGFDPNVGRFFKQFLLLLLVNQMASALFRFIAAVGRTMGVASTFGAFALLLQFALGGFILARNDVKDWWIWGYWTSPLMYSVNAILVNEFDGQKWKHIVAGGTEPLGAAVVRARGFFPDAYWYWIGVGALAGFIVMFNIAYSVALAYLNPFDKPQATISDESENNESESSPQITSTQEGDSASENKKKGMVLPFDPHSITFDEVVYSVDMPPEMRESGTSDNRLVLLKSVSGAFRPGVLTALMGVSGAGKTTLMDVLAGRKTGGYIDGSIKISGYPKKQDTFARISGYCEQNDIHSPYVTVFESLVYSAWLRLPQDVNEEKRMMFVEEVMDLVELTPLRSALVGLPGVNGLSTEQRKRLTIAVELVANPSIIFMDEPTSGLDARAAAIVMRAVRNTVDTGRTVVCTIHQPSIDIFEAFDELFLMKRGGQEIYVGPLGRQSCHLIKYFESIPGVSKIVEGYNPATWMLEVTASSQEMALGVDFTDLYKKSDLYRRNKALIDELSVPRPGTSDLHFDSEFSQPFWTQCMACLWKQHWSYWRNPAYTAVRLIFTTFIALIFGTMFWDIGTKVSRNQDLVNAMGSMYAAVLFLGVQNSSSVQPVVSVERTVFYREKAAGMYSAIPYAFAQVLIEIPYIFVQATVYGLIVYSMIGFEWTVAKFFWDFFFMFFTFLYFTFFGMMTVAVTPNQNVASIVAGFFYTVWNLFSGFIVPRPRIPIWWRWYYWGCPIAWTLYGLVASQFGDLQDPLTDQNQTVEQFLRSNFGFKHDFLGVVAAVIVAFAVVFAFTFALGIKAFNFQRR.

The region spanning 165 to 438 is the ABC transporter 1 domain; sequence LDSIHILPSK…FESMGFKCPE (274 aa). An ATP-binding site is contributed by 198–205; it reads GPPGSGKT. Positions 516-729 constitute an ABC transmembrane type-2 1 domain; sequence QLLKVCTERE…SVNAILVNEF (214 aa). Helical transmembrane passes span 534–554, 567–587, 622–642, 653–673, 679–699, 707–727, and 764–784; these read FVYL…MTIF, GGIY…NGLS, IPVT…VMGF, FLLL…IAAV, VAST…GFIL, WWIW…ILVN, and IGVG…SVAL. Residues 796-826 form a disordered region; that stretch reads TISDESENNESESSPQITSTQEGDSASENKK. The span at 810–821 shows a compositional bias: polar residues; the sequence is PQITSTQEGDSA. Residues 838 to 1090 form the ABC transporter 2 domain; that stretch reads ITFDEVVYSV…HLIKYFESIP (253 aa). 883-890 contributes to the ATP binding site; the sequence is GVSGAGKT. The region spanning 1163 to 1377 is the ABC transmembrane type-2 2 domain; the sequence is TQCMACLWKQ…TLYGLVASQF (215 aa). 7 helical membrane passes run 1184–1204, 1214–1234, 1270–1290, 1301–1321, 1327–1347, 1358–1378, and 1408–1428; these read AVRL…FWDI, LVNA…QNSS, IPYI…MIGF, FFFM…TVAV, VASI…GFIV, WYYW…SQFG, and VVAA…ALGI.

The protein belongs to the ABC transporter superfamily. ABCG family. PDR (TC 3.A.1.205) subfamily. In terms of tissue distribution, roots, petals and leaf epidermis, where it is confined to glandular trichomes (at protein level).

It localises to the cell membrane. Functionally, excretes secondary metabolites such as terpenes. Involved in both constitutive and jasmonic acid-dependent induced defense. Confers some resistance to sclareol and B.cinerea. The sequence is that of Pleiotropic drug resistance protein 1 (PDR1) from Nicotiana plumbaginifolia (Leadwort-leaved tobacco).